Reading from the N-terminus, the 306-residue chain is Ribonuclease Z (306 aa).

His63, His65, Asp67, His68, His141, Asp211, and His269 together coordinate Zn(2+). Catalysis depends on Asp67, which acts as the Proton acceptor.

Belongs to the RNase Z family. In terms of assembly, homodimer. The cofactor is Zn(2+).

It catalyses the reaction Endonucleolytic cleavage of RNA, removing extra 3' nucleotides from tRNA precursor, generating 3' termini of tRNAs. A 3'-hydroxy group is left at the tRNA terminus and a 5'-phosphoryl group is left at the trailer molecule.. Zinc phosphodiesterase, which displays some tRNA 3'-processing endonuclease activity. Probably involved in tRNA maturation, by removing a 3'-trailer from precursor tRNA. The chain is Ribonuclease Z from Staphylococcus epidermidis (strain ATCC 35984 / DSM 28319 / BCRC 17069 / CCUG 31568 / BM 3577 / RP62A).